Consider the following 62-residue polypeptide: Large ribosomal subunit protein bL32m (62 aa).

It belongs to the bacterial ribosomal protein bL32 family.

The protein localises to the mitochondrion. The polypeptide is Large ribosomal subunit protein bL32m (RPL32) (Reclinomonas americana).